Here is a 403-residue protein sequence, read N- to C-terminus: Dual-specificity RNA methyltransferase RlmN (403 aa).

Positions 1-25 (MTKIPMQPADSTPATFHPNAPTKTN) are disordered. Glutamate 112 functions as the Proton acceptor in the catalytic mechanism. The Radical SAM core domain occupies 123-364 (VNGRKTLCIS…VCTIRQTRGD (242 aa)). Cysteines 130 and 370 form a disulfide. Residues cysteine 137, cysteine 141, and cysteine 144 each coordinate [4Fe-4S] cluster. S-adenosyl-L-methionine contacts are provided by residues 193 to 194 (GE), serine 225, 247 to 249 (SLH), and asparagine 327. Cysteine 370 serves as the catalytic S-methylcysteine intermediate.

The protein belongs to the radical SAM superfamily. RlmN family. It depends on [4Fe-4S] cluster as a cofactor.

The protein localises to the cytoplasm. The enzyme catalyses adenosine(2503) in 23S rRNA + 2 reduced [2Fe-2S]-[ferredoxin] + 2 S-adenosyl-L-methionine = 2-methyladenosine(2503) in 23S rRNA + 5'-deoxyadenosine + L-methionine + 2 oxidized [2Fe-2S]-[ferredoxin] + S-adenosyl-L-homocysteine. It carries out the reaction adenosine(37) in tRNA + 2 reduced [2Fe-2S]-[ferredoxin] + 2 S-adenosyl-L-methionine = 2-methyladenosine(37) in tRNA + 5'-deoxyadenosine + L-methionine + 2 oxidized [2Fe-2S]-[ferredoxin] + S-adenosyl-L-homocysteine. Its function is as follows. Specifically methylates position 2 of adenine 2503 in 23S rRNA and position 2 of adenine 37 in tRNAs. m2A2503 modification seems to play a crucial role in the proofreading step occurring at the peptidyl transferase center and thus would serve to optimize ribosomal fidelity. In Psychrobacter sp. (strain PRwf-1), this protein is Dual-specificity RNA methyltransferase RlmN.